The chain runs to 701 residues: Long chain acyl-CoA synthetase 6, peroxisomal (701 aa).

Positions 1–38 (MDSSSSSSSAAARRRINAIHSHLVTSSRSSPLLRSNPT) are cleaved as a propeptide — removed in mature form. Positions 15–23 (RINAIHSHL) match the Microbody targeting signal motif. 266 to 277 (ICYTSGTTGTPK) serves as a coordination point for ATP. The tract at residues 526–550 (DGWLHTGDIGLWLPGGRLKIIDRKK) is fatty acid-binding.

It belongs to the ATP-dependent AMP-binding enzyme family. The cofactor is Mg(2+). In terms of tissue distribution, expressed in roots, stems, leaves flowers and germinating seedling. Preferentially expressed in seeds and senescent leaves.

The protein localises to the peroxisome. It localises to the glyoxysome membrane. The catalysed reaction is a long-chain fatty acid + ATP + CoA = a long-chain fatty acyl-CoA + AMP + diphosphate. The enzyme catalyses tetradecanoate + ATP + CoA = tetradecanoyl-CoA + AMP + diphosphate. It carries out the reaction hexadecanoate + ATP + CoA = hexadecanoyl-CoA + AMP + diphosphate. It catalyses the reaction (9Z)-octadecenoate + ATP + CoA = (9Z)-octadecenoyl-CoA + AMP + diphosphate. The catalysed reaction is (9Z,12Z)-octadecadienoate + ATP + CoA = (9Z,12Z)-octadecadienoyl-CoA + AMP + diphosphate. The enzyme catalyses (9Z,12Z,15Z)-octadecatrienoate + ATP + CoA = (9Z,12Z,15Z)-octadecatrienoyl-CoA + AMP + diphosphate. It functions in the pathway lipid metabolism; fatty acid metabolism. Activation of long-chain fatty acids for both synthesis of cellular lipids, and degradation via beta-oxidation. Preferentially uses palmitate, palmitoleate, oleate, linoleate and eicosenoate as substrates. Can use myristate and linolenate as substrates. May play a regulatory role both in fatty acid import into glyoxysomes and in fatty acid beta-oxidation. Functions redundantly with LACS7 in lipid mobilization for beta-oxidation during seed germination, which is essential for postgerminative growth and seedling establishment. The protein is Long chain acyl-CoA synthetase 6, peroxisomal of Arabidopsis thaliana (Mouse-ear cress).